The following is a 570-amino-acid chain: Conserved oligomeric Golgi complex subunit 8 (570 aa).

The protein belongs to the COG8 family. In terms of assembly, component of the conserved oligomeric Golgi complex which is composed of eight different subunits and is required for normal Golgi morphology and localization.

Its subcellular location is the golgi apparatus membrane. In terms of biological role, required for normal Golgi function. This Drosophila melanogaster (Fruit fly) protein is Conserved oligomeric Golgi complex subunit 8.